We begin with the raw amino-acid sequence, 487 residues long: Beta-barrel assembly-enhancing protease (487 aa).

The first 27 residues, 1–27, serve as a signal peptide directing secretion; it reads MFRQLKKNLVATLIAAMTIGQVAPAFA. Zn(2+) is bound at residue His-136. Glu-137 is a catalytic residue. 2 residues coordinate Zn(2+): His-140 and Glu-201. Asp-205 acts as the Proton donor in catalysis. TPR repeat units follow at residues 309-342, 344-376, 377-409, and 427-460; these read RAAQ…EPGN, WYLD…RTNP, VLQL…NKDD, and DQEL…VKLG.

The protein belongs to the peptidase M48 family. BepA subfamily. In terms of assembly, interacts with BamA and LoiP. The cofactor is Zn(2+).

It is found in the periplasm. Its activity is regulated as follows. Protease activity is inhibited by the metal chelating reagents 1,10-phenanthroline and EDTA. Functions both as a chaperone and a metalloprotease. Maintains the integrity of the outer membrane by promoting either the assembly or the elimination of outer membrane proteins, depending on their folding state. Promotes disulfide rearrangement of LptD during its biogenesis, and proteolytic degradation of LptD and BamA when their proper assembly is compromised. May facilitate membrane attachment of LoiP under unfavorable conditions. The protein is Beta-barrel assembly-enhancing protease of Escherichia coli (strain K12).